The chain runs to 177 residues: Large ribosomal subunit protein uL6 (177 aa).

Belongs to the universal ribosomal protein uL6 family. Part of the 50S ribosomal subunit.

Functionally, this protein binds to the 23S rRNA, and is important in its secondary structure. It is located near the subunit interface in the base of the L7/L12 stalk, and near the tRNA binding site of the peptidyltransferase center. This is Large ribosomal subunit protein uL6 from Rickettsia typhi (strain ATCC VR-144 / Wilmington).